Consider the following 429-residue polypeptide: Chaperone SurA (429 aa).

The N-terminal stretch at 1-18 (MFKRIALVCALFSGVCFA) is a signal peptide. 2 consecutive PpiC domains span residues 170-271 (NLTY…KLVA) and 281-380 (ITQT…EVIA).

Its subcellular location is the periplasm. It catalyses the reaction [protein]-peptidylproline (omega=180) = [protein]-peptidylproline (omega=0). In terms of biological role, chaperone involved in the correct folding and assembly of outer membrane proteins. Recognizes specific patterns of aromatic residues and the orientation of their side chains, which are found more frequently in integral outer membrane proteins. May act in both early periplasmic and late outer membrane-associated steps of protein maturation. This Legionella pneumophila (strain Lens) protein is Chaperone SurA.